We begin with the raw amino-acid sequence, 252 residues long: MILYEYPFNERIRTLLRLEDLFERLDFFLVQEHPLQHHVALTTLFEVVDVAGRADLKSDLLKELDRQRQTLTALRANPQIDQDALDAVISELETASGNLTATHGKAGQLIADNEWLTSIRSRAIIPGGTCEFDLPAYFAWQHHPAERRRADIIKWAQPLVPLRDATMIVLRLLRESGQSGKVIANAGSYQQMLSGRVYQLMQVRLDESALGFIPEISANKYMLWVRFTQQDGDLRPKPVDADIPFQLKLCNF.

This sequence belongs to the ZapD family. As to quaternary structure, interacts with FtsZ.

It is found in the cytoplasm. In terms of biological role, cell division factor that enhances FtsZ-ring assembly. Directly interacts with FtsZ and promotes bundling of FtsZ protofilaments, with a reduction in FtsZ GTPase activity. The polypeptide is Cell division protein ZapD (Ralstonia pickettii (strain 12J)).